A 390-amino-acid polypeptide reads, in one-letter code: Homoserine O-succinyltransferase (390 aa).

Residues 59 to 369 (NAVLVCHALN…PHGHDAFLLD (311 aa)) form the AB hydrolase-1 domain. Residue serine 165 is the Nucleophile of the active site. Arginine 235 contacts substrate. Catalysis depends on residues aspartate 330 and histidine 363. Position 364 (aspartate 364) interacts with substrate.

It belongs to the AB hydrolase superfamily. MetX family. In terms of assembly, homodimer.

It localises to the cytoplasm. It carries out the reaction L-homoserine + succinyl-CoA = O-succinyl-L-homoserine + CoA. It functions in the pathway amino-acid biosynthesis; L-methionine biosynthesis via de novo pathway; O-succinyl-L-homoserine from L-homoserine: step 1/1. Functionally, transfers a succinyl group from succinyl-CoA to L-homoserine, forming succinyl-L-homoserine. This is Homoserine O-succinyltransferase from Cupriavidus metallidurans (strain ATCC 43123 / DSM 2839 / NBRC 102507 / CH34) (Ralstonia metallidurans).